The sequence spans 258 residues: Imidazole glycerol phosphate synthase subunit HisF (258 aa).

Active-site residues include aspartate 11 and aspartate 130.

This sequence belongs to the HisA/HisF family. In terms of assembly, heterodimer of HisH and HisF.

The protein resides in the cytoplasm. The catalysed reaction is 5-[(5-phospho-1-deoxy-D-ribulos-1-ylimino)methylamino]-1-(5-phospho-beta-D-ribosyl)imidazole-4-carboxamide + L-glutamine = D-erythro-1-(imidazol-4-yl)glycerol 3-phosphate + 5-amino-1-(5-phospho-beta-D-ribosyl)imidazole-4-carboxamide + L-glutamate + H(+). Its pathway is amino-acid biosynthesis; L-histidine biosynthesis; L-histidine from 5-phospho-alpha-D-ribose 1-diphosphate: step 5/9. In terms of biological role, IGPS catalyzes the conversion of PRFAR and glutamine to IGP, AICAR and glutamate. The HisF subunit catalyzes the cyclization activity that produces IGP and AICAR from PRFAR using the ammonia provided by the HisH subunit. The polypeptide is Imidazole glycerol phosphate synthase subunit HisF (Gluconacetobacter diazotrophicus (strain ATCC 49037 / DSM 5601 / CCUG 37298 / CIP 103539 / LMG 7603 / PAl5)).